Here is a 362-residue protein sequence, read N- to C-terminus: Acetylglutamate kinase (362 aa).

The span at 1-11 shows a compositional bias: pro residues; the sequence is MNAPTRTPPPS. A disordered region spans residues 1 to 42; sequence MNAPTRTPPPSNGGHGSTGSTGSTGDAAPGGGTGRGPAATAR. Substrate contacts are provided by residues 106 to 107, arginine 128, and asparagine 227; that span reads GG. Residues 329–362 are disordered; the sequence is MAESGTSPEPGTPPAPAARPAGIVPAGEPTGGTP. The span at 346–355 shows a compositional bias: low complexity; sequence ARPAGIVPAG.

Belongs to the acetylglutamate kinase family. ArgB subfamily.

It is found in the cytoplasm. It catalyses the reaction N-acetyl-L-glutamate + ATP = N-acetyl-L-glutamyl 5-phosphate + ADP. It participates in amino-acid biosynthesis; L-arginine biosynthesis; N(2)-acetyl-L-ornithine from L-glutamate: step 2/4. Catalyzes the ATP-dependent phosphorylation of N-acetyl-L-glutamate. This chain is Acetylglutamate kinase, found in Frankia casuarinae (strain DSM 45818 / CECT 9043 / HFP020203 / CcI3).